We begin with the raw amino-acid sequence, 357 residues long: UDP-N-acetylglucosamine--N-acetylmuramyl-(pentapeptide) pyrophosphoryl-undecaprenol N-acetylglucosamine transferase (357 aa).

UDP-N-acetyl-alpha-D-glucosamine is bound by residues 15–17 (TGG), Asn124, Arg165, Ser194, and Gln288.

The protein belongs to the glycosyltransferase 28 family. MurG subfamily.

The protein resides in the cell inner membrane. The enzyme catalyses di-trans,octa-cis-undecaprenyl diphospho-N-acetyl-alpha-D-muramoyl-L-alanyl-D-glutamyl-meso-2,6-diaminopimeloyl-D-alanyl-D-alanine + UDP-N-acetyl-alpha-D-glucosamine = di-trans,octa-cis-undecaprenyl diphospho-[N-acetyl-alpha-D-glucosaminyl-(1-&gt;4)]-N-acetyl-alpha-D-muramoyl-L-alanyl-D-glutamyl-meso-2,6-diaminopimeloyl-D-alanyl-D-alanine + UDP + H(+). The protein operates within cell wall biogenesis; peptidoglycan biosynthesis. Its function is as follows. Cell wall formation. Catalyzes the transfer of a GlcNAc subunit on undecaprenyl-pyrophosphoryl-MurNAc-pentapeptide (lipid intermediate I) to form undecaprenyl-pyrophosphoryl-MurNAc-(pentapeptide)GlcNAc (lipid intermediate II). This is UDP-N-acetylglucosamine--N-acetylmuramyl-(pentapeptide) pyrophosphoryl-undecaprenol N-acetylglucosamine transferase from Trichormus variabilis (strain ATCC 29413 / PCC 7937) (Anabaena variabilis).